Consider the following 65-residue polypeptide: Bacteriocin amylovorin-L (65 aa).

The propeptide occupies 1 to 15 (MKQLNSEQLQNIIGG). Residues 39 to 59 (LGGVWGAVIGGVGGAAVCGLA) traverse the membrane as a helical segment.

As to quaternary structure, active lactobin is composed of two different peptides, one which is lactobin A.

It localises to the secreted. It is found in the host cell membrane. This heat stable bacteriocin inhibits the growth of closely related Lactobacillus species. It may act as a pore-forming protein, creating a channel in the cell membrane. It kills Lactobacillus helveticus ATCC 15009, but displays no activity towards Listeria species. In Lactobacillus amylovorus, this protein is Bacteriocin amylovorin-L (amyL).